The sequence spans 283 residues: Probable endonuclease 4 (283 aa).

Zn(2+) is bound by residues H67, H107, E144, D178, H181, H215, D228, H230, and E260.

The protein belongs to the AP endonuclease 2 family. Zn(2+) is required as a cofactor.

It carries out the reaction Endonucleolytic cleavage to 5'-phosphooligonucleotide end-products.. Functionally, endonuclease IV plays a role in DNA repair. It cleaves phosphodiester bonds at apurinic or apyrimidinic (AP) sites, generating a 3'-hydroxyl group and a 5'-terminal sugar phosphate. The chain is Probable endonuclease 4 from Citrifermentans bemidjiense (strain ATCC BAA-1014 / DSM 16622 / JCM 12645 / Bem) (Geobacter bemidjiensis).